We begin with the raw amino-acid sequence, 98 residues long: NADH-ubiquinone oxidoreductase chain 4L (98 aa).

Helical transmembrane passes span M1–M21, A29–L49, and I61–V81.

Belongs to the complex I subunit 4L family. Core subunit of respiratory chain NADH dehydrogenase (Complex I) which is composed of 45 different subunits.

The protein resides in the mitochondrion inner membrane. The catalysed reaction is a ubiquinone + NADH + 5 H(+)(in) = a ubiquinol + NAD(+) + 4 H(+)(out). In terms of biological role, core subunit of the mitochondrial membrane respiratory chain NADH dehydrogenase (Complex I) which catalyzes electron transfer from NADH through the respiratory chain, using ubiquinone as an electron acceptor. Part of the enzyme membrane arm which is embedded in the lipid bilayer and involved in proton translocation. This chain is NADH-ubiquinone oxidoreductase chain 4L (MT-ND4L), found in Megaptera novaeangliae (Humpback whale).